Here is a 547-residue protein sequence, read N- to C-terminus: Chaperonin GroEL (547 aa).

ATP-binding positions include 30-33 (TLGP), 87-91 (DGTTT), Gly-414, 478-480 (DAL), and Asp-494.

Belongs to the chaperonin (HSP60) family. Forms a cylinder of 14 subunits composed of two heptameric rings stacked back-to-back. Interacts with the co-chaperonin GroES.

It is found in the cytoplasm. The catalysed reaction is ATP + H2O + a folded polypeptide = ADP + phosphate + an unfolded polypeptide.. Functionally, together with its co-chaperonin GroES, plays an essential role in assisting protein folding. The GroEL-GroES system forms a nano-cage that allows encapsulation of the non-native substrate proteins and provides a physical environment optimized to promote and accelerate protein folding. The sequence is that of Chaperonin GroEL from Desulforudis audaxviator (strain MP104C).